The primary structure comprises 169 residues: Sorting nexin-24 (169 aa).

Met1 carries the post-translational modification N-acetylmethionine. The PX domain occupies 1-125 (MEVYIPSFRH…SFDETESEES (125 aa)). Arg38, Ser40, Lys61, and Arg74 together coordinate a 1,2-diacyl-sn-glycero-3-phospho-(1D-myo-inositol-3-phosphate). Residues Ser113 and Ser116 each carry the phosphoserine modification.

The protein belongs to the sorting nexin family.

It is found in the cytoplasmic vesicle membrane. In terms of biological role, may be involved in several stages of intracellular trafficking. In Rattus norvegicus (Rat), this protein is Sorting nexin-24 (Snx24).